A 110-amino-acid chain; its full sequence is UPF0060 membrane protein Swit_0423 (110 aa).

The next 4 helical transmembrane spans lie at 6–26 (LFIFVAAALCEIGGCFAFWAW), 29–49 (LGKSPLWAVGGVGLLILFAWL), 61–81 (AFAAYGGIYICASLGWMWAVE), and 90–110 (LIGVLLCAVGSAVILLGPRTA).

It belongs to the UPF0060 family.

The protein localises to the cell inner membrane. The protein is UPF0060 membrane protein Swit_0423 of Rhizorhabdus wittichii (strain DSM 6014 / CCUG 31198 / JCM 15750 / NBRC 105917 / EY 4224 / RW1) (Sphingomonas wittichii).